The primary structure comprises 430 residues: Protein trichome birefringence-like 24 (430 aa).

Residues 15–35 (VLLIKLISAILISFFAFRLFI) form a helical; Signal-anchor for type II membrane protein membrane-spanning segment. Residues 153-155 (GDS) carry the GDS motif motif. The DCXHWCLPGXXDXWN motif motif lies at 406 to 420 (DCLHWCLPGPFDYLN).

It belongs to the PC-esterase family. TBL subfamily.

The protein resides in the membrane. May act as a bridging protein that binds pectin and other cell wall polysaccharides. Probably involved in maintaining esterification of pectins. May be involved in the specific O-acetylation of cell wall polymers. The sequence is that of Protein trichome birefringence-like 24 (TBL24) from Arabidopsis thaliana (Mouse-ear cress).